Reading from the N-terminus, the 505-residue chain is Putative ribose/galactose/methyl galactoside import ATP-binding protein 1 (505 aa).

ABC transporter domains follow at residues Leu10–Ser245 and Arg256–Gly501. Gly42–Ser49 is an ATP binding site.

It belongs to the ABC transporter superfamily. Carbohydrate importer 2 (CUT2) (TC 3.A.1.2) family.

The protein resides in the cell inner membrane. The catalysed reaction is D-ribose(out) + ATP + H2O = D-ribose(in) + ADP + phosphate + H(+). It carries out the reaction D-galactose(out) + ATP + H2O = D-galactose(in) + ADP + phosphate + H(+). Part of an ABC transporter complex involved in carbohydrate import. Could be involved in ribose, galactose and/or methyl galactoside import. Responsible for energy coupling to the transport system. The polypeptide is Putative ribose/galactose/methyl galactoside import ATP-binding protein 1 (Agrobacterium fabrum (strain C58 / ATCC 33970) (Agrobacterium tumefaciens (strain C58))).